Consider the following 602-residue polypeptide: Sulfite reductase [NADPH] hemoprotein beta-component (602 aa).

The span at 1–15 (MDDHKTASPPRERSY) shows a compositional bias: basic and acidic residues. Residues 1-24 (MDDHKTASPPRERSYETPPAERPI) form a disordered region. Cys-458, Cys-464, Cys-503, and Cys-507 together coordinate [4Fe-4S] cluster. Cys-507 lines the siroheme pocket.

Belongs to the nitrite and sulfite reductase 4Fe-4S domain family. Alpha(8)-beta(8). The alpha component is a flavoprotein, the beta component is a hemoprotein. Requires siroheme as cofactor. [4Fe-4S] cluster serves as cofactor.

It carries out the reaction hydrogen sulfide + 3 NADP(+) + 3 H2O = sulfite + 3 NADPH + 4 H(+). It functions in the pathway sulfur metabolism; hydrogen sulfide biosynthesis; hydrogen sulfide from sulfite (NADPH route): step 1/1. In terms of biological role, component of the sulfite reductase complex that catalyzes the 6-electron reduction of sulfite to sulfide. This is one of several activities required for the biosynthesis of L-cysteine from sulfate. This Methylobacterium nodulans (strain LMG 21967 / CNCM I-2342 / ORS 2060) protein is Sulfite reductase [NADPH] hemoprotein beta-component.